Here is a 338-residue protein sequence, read N- to C-terminus: MPKNDLLLRSLRGEPIGRFPVWLMRQAGRYMPEYRKIRNRVKNFLELCKNVDLATEISLLPLKILGVDAIIIFSDILVPLEPLGVKVEFVEGEGPKLSWSGKVSDLKKYDPSQNAYVYEIIKRVKEAQDEVPVIGFAGAPFTLLSYLIEGGASKDFKSTKLFMWENPKEYKRLMDILTETVLAYLKEQIKAGADVVQIFDSWVNNLSLEDYGEYVYPYVNYLISELKDFSDTPVIYFFRGSSSFIDLAVDYRADALSVDWSVDIPELFKIYDKGFQGNLEPAVLYASEEVIEEKTLGLLRRIPVKTRYVFNLGHGLAPDMELEKVKYLVDLVKSFPLT.

Residues 25 to 29 (RQAGR), Phe-44, Asp-75, Tyr-146, Ser-201, and His-314 contribute to the substrate site.

It belongs to the uroporphyrinogen decarboxylase family. In terms of assembly, homodimer.

It localises to the cytoplasm. It carries out the reaction uroporphyrinogen III + 4 H(+) = coproporphyrinogen III + 4 CO2. The protein operates within porphyrin-containing compound metabolism; protoporphyrin-IX biosynthesis; coproporphyrinogen-III from 5-aminolevulinate: step 4/4. Catalyzes the decarboxylation of four acetate groups of uroporphyrinogen-III to yield coproporphyrinogen-III. This chain is Uroporphyrinogen decarboxylase, found in Aquifex aeolicus (strain VF5).